The following is a 211-amino-acid chain: DNA/RNA-binding protein ALBA2 (211 aa).

Basic and acidic residues predominate over residues 84-99 (NSGLKKNAKNEDKKSG). Residues 84 to 121 (NSGLKKNAKNEDKKSGDEEEEEEEEEEDEENNKNKEAN) are disordered. Residues 100 to 113 (DEEEEEEEEEEDEE) show a composition bias toward acidic residues.

This sequence belongs to the histone-like Alba family. In terms of assembly, identified in a TARE6-associated complex consisting of over 30 proteins and including ALBA1, ALBA2 and ALBA4; the complex binds to the non-coding subtelomeric repeat region TARE6.

The protein resides in the nucleus. The protein localises to the chromosome. Its subcellular location is the telomere. It localises to the cytoplasm. In terms of biological role, possesses DNA- and RNA-binding activities. Binds to DNA with relaxed sequence specificity. Associates with the subtelomeric TARE6 repeats. This is DNA/RNA-binding protein ALBA2 from Plasmodium falciparum (isolate 3D7).